The chain runs to 73 residues: Beta-defensin 40 (73 aa).

An N-terminal signal peptide occupies residues 1-23 (MKISCFLLMIFFLSCFQINPVAV). 3 disulfides stabilise this stretch: Cys29/Cys58, Cys36/Cys51, and Cys41/Cys59.

Belongs to the beta-defensin family. Only expressed in epididymis (corpus, cauda and caput).

It is found in the secreted. Has antibacterial activity. This chain is Beta-defensin 40 (Defb40), found in Mus musculus (Mouse).